The sequence spans 124 residues: Tax1-binding protein 3 (124 aa).

Serine 2 is subject to N-acetylserine. The PDZ domain occupies arginine 15–glutamine 112. At serine 61 the chain carries Phosphoserine.

In terms of assembly, interacts (via its PDZ domain) with GLS2. Interacts (via its PDZ domain) with RTKN (via the C-terminal region); this interaction facilitates Rho-mediated activation of the FOS serum response element (SRE). Interacts (via PDZ domain) with ARHGEF16. Interacts (via PDZ domain) with KCNJ4 (via C-terminus). Competes with LIN7A for KCNJ4 binding. Interacts (via its PDZ domain) with CTNNB1; this interaction inhibits the transcriptional activity of CTNNB1. Interacts with ADGRB2.

It localises to the cytoplasm. Its subcellular location is the nucleus. It is found in the cell membrane. Its function is as follows. May regulate a number of protein-protein interactions by competing for PDZ domain binding sites. Binds CTNNB1 and may thereby act as an inhibitor of the Wnt signaling pathway. Competes with LIN7A for KCNJ4 binding, and thereby promotes KCNJ4 internalization. May play a role in the Rho signaling pathway. The chain is Tax1-binding protein 3 from Mus musculus (Mouse).